A 68-amino-acid polypeptide reads, in one-letter code: MSGNQNGENVQQKKEKMCSIGETIYTWTQNKHATTYVGTYTKAFFSGEVCREIREHDEFLGMSFSSFF.

This is an uncharacterized protein from Caenorhabditis elegans.